Here is a 56-residue protein sequence, read N- to C-terminus: UPF0434 protein ECH_0194 (56 aa).

This sequence belongs to the UPF0434 family.

The sequence is that of UPF0434 protein ECH_0194 from Ehrlichia chaffeensis (strain ATCC CRL-10679 / Arkansas).